The primary structure comprises 150 residues: MQVILLDKIGNLGSLGDQVNVKSGYARNFLIPQGKVVMATKANVEMFETRRAELEAKVAEQRAASEARAEKLSALDAVVIASKAGDEGKLFGSIGTRDIADAITAAGEAVVKSEVRLPEGALRNIGEYEVSIQLNSDVFAKVNLTIVAAE.

Belongs to the bacterial ribosomal protein bL9 family.

Functionally, binds to the 23S rRNA. The polypeptide is Large ribosomal subunit protein bL9 (Photobacterium profundum (strain SS9)).